The primary structure comprises 461 residues: Protein FAM124B (461 aa).

Phosphoserine is present on serine 49. Positions 302–346 are disordered; that stretch reads VELPEPGGRPVSDGSSNTWWKSAGGSAQPSSPATESQPQLSSLHL. Residues 323–334 are compositionally biased toward low complexity; the sequence is SAGGSAQPSSPA.

Belongs to the FAM124 family. As to quaternary structure, interacts with CHD7 and CHD8.

Its subcellular location is the nucleus. The protein is Protein FAM124B (FAM124B) of Bos taurus (Bovine).